We begin with the raw amino-acid sequence, 321 residues long: 4-dihydromethyl-trisporate dehydrogenase (321 aa).

Tyrosine 51 acts as the Proton donor in catalysis. A substrate-binding site is contributed by histidine 113.

This sequence belongs to the aldo/keto reductase family.

Its pathway is pheromone biosynthesis; trisporate biosynthesis. Its function is as follows. Catalyzes the NADP-dependent oxidation of (+) mating-type specific precursor 4-dihydromethyl-trisporate to methyl-trisporate. The protein is 4-dihydromethyl-trisporate dehydrogenase (tdh) of Mucor mucedo (Common pinmould).